Consider the following 363-residue polypeptide: Aminomethyltransferase (363 aa).

The protein belongs to the GcvT family. As to quaternary structure, the glycine cleavage system is composed of four proteins: P, T, L and H.

The enzyme catalyses N(6)-[(R)-S(8)-aminomethyldihydrolipoyl]-L-lysyl-[protein] + (6S)-5,6,7,8-tetrahydrofolate = N(6)-[(R)-dihydrolipoyl]-L-lysyl-[protein] + (6R)-5,10-methylene-5,6,7,8-tetrahydrofolate + NH4(+). In terms of biological role, the glycine cleavage system catalyzes the degradation of glycine. The polypeptide is Aminomethyltransferase (Teredinibacter turnerae (strain ATCC 39867 / T7901)).